The sequence spans 61 residues: Temporin-CG3 (61 aa).

The first 22 residues, 1-22 (MFTMKKPLLLLFFLATINLSLC), serve as a signal peptide directing secretion. Residues 23-44 (EQERNAEEERRDEPDERNAEVE) constitute a propeptide, removed in mature form.

The protein belongs to the frog skin active peptide (FSAP) family. Temporin subfamily. In terms of tissue distribution, expressed by the skin glands.

It is found in the secreted. Functionally, antimicrobial peptide active against a variety of Gram-positive bacterial strains but not against Gram-negative bacteria. Has weak antifungal activity against a slime mold isolate. Has weak hemolytic activity against human erythrocytes. The chain is Temporin-CG3 from Amolops chunganensis (Chungan torrent frog).